We begin with the raw amino-acid sequence, 188 residues long: dCTP deaminase (188 aa).

DCTP is bound at residue Lys109–Arg114. The Proton donor/acceptor role is filled by Glu135. Positions 154, 168, and 178 each coordinate dCTP.

It belongs to the dCTP deaminase family. As to quaternary structure, homotrimer.

The catalysed reaction is dCTP + H2O + H(+) = dUTP + NH4(+). It functions in the pathway pyrimidine metabolism; dUMP biosynthesis; dUMP from dCTP (dUTP route): step 1/2. In terms of biological role, catalyzes the deamination of dCTP to dUTP. This Helicobacter pylori (strain Shi470) protein is dCTP deaminase.